The following is a 331-amino-acid chain: L-lactate dehydrogenase A chain (331 aa).

NAD(+)-binding positions include 29 to 57 (GMVG…MEDK) and Arg98. 3 residues coordinate substrate: Arg105, Asn137, and Arg168. Residue Asn137 coordinates NAD(+). The Proton acceptor role is filled by His192. Thr247 provides a ligand contact to substrate.

This sequence belongs to the LDH/MDH superfamily. LDH family. In terms of assembly, homotetramer.

Its subcellular location is the cytoplasm. It carries out the reaction (S)-lactate + NAD(+) = pyruvate + NADH + H(+). It participates in fermentation; pyruvate fermentation to lactate; (S)-lactate from pyruvate: step 1/1. Interconverts simultaneously and stereospecifically pyruvate and lactate with concomitant interconversion of NADH and NAD(+). In Notothenia angustata (Rockcod), this protein is L-lactate dehydrogenase A chain (ldha).